A 236-amino-acid polypeptide reads, in one-letter code: Pyridoxine 5'-phosphate synthase (236 aa).

Residue asparagine 6 participates in 3-amino-2-oxopropyl phosphate binding. 1-deoxy-D-xylulose 5-phosphate is bound at residue 8-9 (DH). 3-amino-2-oxopropyl phosphate is bound at residue arginine 17. Catalysis depends on histidine 42, which acts as the Proton acceptor. 2 residues coordinate 1-deoxy-D-xylulose 5-phosphate: arginine 44 and histidine 49. Glutamate 69 (proton acceptor) is an active-site residue. Residue threonine 99 participates in 1-deoxy-D-xylulose 5-phosphate binding. Histidine 192 acts as the Proton donor in catalysis. 3-amino-2-oxopropyl phosphate-binding positions include glycine 193 and 216–217 (GH).

This sequence belongs to the PNP synthase family. In terms of assembly, homooctamer; tetramer of dimers.

The protein resides in the cytoplasm. The catalysed reaction is 3-amino-2-oxopropyl phosphate + 1-deoxy-D-xylulose 5-phosphate = pyridoxine 5'-phosphate + phosphate + 2 H2O + H(+). Its pathway is cofactor biosynthesis; pyridoxine 5'-phosphate biosynthesis; pyridoxine 5'-phosphate from D-erythrose 4-phosphate: step 5/5. In terms of biological role, catalyzes the complicated ring closure reaction between the two acyclic compounds 1-deoxy-D-xylulose-5-phosphate (DXP) and 3-amino-2-oxopropyl phosphate (1-amino-acetone-3-phosphate or AAP) to form pyridoxine 5'-phosphate (PNP) and inorganic phosphate. The polypeptide is Pyridoxine 5'-phosphate synthase (Aquifex pyrophilus).